The chain runs to 470 residues: Iron-sulfur cluster assembly SufBD family protein ABCI9 (470 aa).

This sequence belongs to the iron-sulfur cluster assembly SufBD family.

This chain is Iron-sulfur cluster assembly SufBD family protein ABCI9 (ABCI9), found in Arabidopsis thaliana (Mouse-ear cress).